An 853-amino-acid polypeptide reads, in one-letter code: Transforming growth factor beta receptor type 3 (853 aa).

Positions 1–23 are cleaved as a signal peptide; that stretch reads MAVTSHHMIPVMVVLMSACLATA. The Extracellular segment spans residues 24 to 789; that stretch reads GPEPSTRCEL…IFHGLDTLTV (766 aa). N-linked (GlcNAc...) asparagine glycans are attached at residues asparagine 37, asparagine 144, and asparagine 493. A disulfide bridge links cysteine 55 with cysteine 200. The 275-residue stretch at 456 to 730 folds into the ZP domain; the sequence is KCDHEKMVVA…PRCVTPDDAC (275 aa). Positions 530–559 are disordered; it reads SPGDSSGWPDGYEDLESGDNGFPGDGDEGE. O-linked (Xyl...) (glycosaminoglycan) serine glycans are attached at residues serine 535 and serine 546. Residues asparagine 572, asparagine 591, and asparagine 698 are each glycosylated (N-linked (GlcNAc...) asparagine). Disulfide bonds link cysteine 640-cysteine 706, cysteine 661-cysteine 730, and cysteine 711-cysteine 723. The segment at 737 to 751 is interaction with TGF-beta ligand; it reads MIWTMMQNKKTFTKP. Residues 790-811 traverse the membrane as a helical segment; the sequence is MGIAFAAFVIGALLTGALWYIY. The Cytoplasmic segment spans residues 812–853; the sequence is SHTGETARRQQVPTSPPASENSSAAHSIGSTQSTPCSSSSTA. The segment covering 820 to 836 has biased composition (polar residues); that stretch reads RQQVPTSPPASENSSAA. The tract at residues 820–853 is disordered; that stretch reads RQQVPTSPPASENSSAAHSIGSTQSTPCSSSSTA. Low complexity predominate over residues 838–853; that stretch reads SIGSTQSTPCSSSSTA. The residue at position 842 (threonine 842) is a Phosphothreonine.

In terms of assembly, forms homodimers and homooligomers. Interacts with DYNLT4. Interacts with integrin ITGA5:ITGB1; this interaction promotes the internalization and trafficking of ITGA5:ITGB1 into endocytic vesicles. Interacts with TGFB1, BMP2, BMP5, BMP7 or GDF5 and inhibin A via the ligand binding domains. Interacts with ALK3/BMPR1A; this interaction results in the cell surface retention of BMPR1A. Interacts with ALK6/BMPR1B; this interaction enhances BMPR1B-mediated stimulation of the BMP signaling pathway. Interacts with the scaffolding protein beta-arrestin2/ARRB2; this interaction mediates internalization of TGFBR3 and thus regulates migration, actin cytoskeleton and activation of CDC42. Post-translationally, extensively modified by glycosaminoglycan groups (GAG). In terms of processing, phosphorylated in the cytoplasmic domain by the type II receptor TGFBR2 at THR-842 to mediate recruitment of ARRB2 and subsequent internalization of TGFBR2 and TGFBR3.

It localises to the cell membrane. Its subcellular location is the secreted. The protein localises to the extracellular space. The protein resides in the extracellular matrix. Its function is as follows. Cell surface receptor that regulates diverse cellular processes including cell proliferation, differentiation, migration, and apoptosis. Initiates BMP, inhibin, and TGF-beta signaling pathways by interacting with different ligands including TGFB1, BMP2, BMP5, BMP7 or GDF5. Alternatively, acts as a cell surface coreceptor for BMP ligands, serving to enhance ligand binding by differentially regulating BMPR1A/ALK3 and BMPR1B/ALK6 receptor trafficking. Promotes epithelial cell adhesion, focal adhesion formation and integrin signaling during epithelial cell spreading on fibronectin. By interacting with the scaffolding protein beta-arrestin2/ARRB2, regulates migration or actin cytoskeleton and promotes the activation of CDC42 as well as the inhibition of NF-kappa-B. In gonadotrope cells, acts as an inhibin A coreceptor and regulates follicle-stimulating hormone (FSH) levels and female fertility. Plays a role in the inhibition of directed and random cell migration in epithelial cells by altering the actin cytoskeletal organization. Participates in epithelial-mesenchymal transformation (EMT) upon binding to BMP2 or TGFB2, by activating the PAR6/SMURF1/RHOA pathway. This chain is Transforming growth factor beta receptor type 3 (Tgfbr3), found in Rattus norvegicus (Rat).